Consider the following 443-residue polypeptide: Packaging protein 1 (443 aa).

Positions 1-75 (MSGAADGTVP…PEAAQPPPSR (75 aa)) are disordered. Residues 13-56 (EDTHQEDSGERECEQRPVHSGREATGESDPALERPDHGERHGPE) are compositionally biased toward basic and acidic residues. 169 to 176 (GPTGSGKS) serves as a coordination point for ATP. Residues 433-443 (VSYANKRKWYD) form a DNA-binding region.

It belongs to the adenoviridae packaging protein 1 family. Homodimer. Part of a genome packaging complex composed of packaging proteins 1, 2 and 3; this complex specifically binds to the packaging sequence on the left end of viral genomic DNA and performs packaging of the viral genome. Interacts with protein 33K.

It is found in the virion. Its subcellular location is the host nucleus. The protein resides in the host nucleoplasm. It localises to the host nucleolus. In terms of biological role, component of the packaging machinery which encapsidates the viral DNA into preformed capsids and transcriptional activator of the viral major late promoter (MLP). Binds, along with packaging proteins 2 and 3, to the specific packaging sequence on the left end of viral genomic DNA and displays ATPase activity thereby providing the power stroke of the packaging machinery. The activity of packaging protein IVa2 is stimulated by protein 33K which acts as a terminase. May be the protein that pumps DNA into the capsid powered by ATP hydrolysis. Specifically binds to the 5'-CG-3' nucleotides of the repeats making up the packaging sequence. Component of the DEF-A and DEF-B transcription factors that bind downstream elements of the major late promoter (MLP), and stimulate transcription from the MLP after initiation of viral DNA replication. DEF-A is a heterodimer packaging proteins 1 and 2 and DEF-B is a homodimer of packaging protein 1. The polypeptide is Packaging protein 1 (Pantherophis guttatus (Corn snake)).